An 83-amino-acid chain; its full sequence is Hainantoxin-III 11 (83 aa).

The N-terminal stretch at 1-21 is a signal peptide; the sequence is MKASMFLALAGLVLLFVVGYA. Residues 22–48 constitute a propeptide that is removed on maturation; that stretch reads SESEEKDFPRELLSKIFAVDDFKGEER. 3 disulfide bridges follow: Cys-50–Cys-65, Cys-57–Cys-70, and Cys-64–Cys-77. Leu-81 carries the leucine amide modification.

This sequence belongs to the neurotoxin 10 (Hwtx-1) family. 15 (Hntx-3) subfamily. Monomer. As to expression, expressed by the venom gland.

Its subcellular location is the secreted. Its function is as follows. Selective antagonist of neuronal tetrodotoxin (TTX)-sensitive voltage-gated sodium channels (IC(50)=1270 nM on Nav1.1/SCN1A, 270 nM on Nav1.2/SCN2A, 491 nM on Nav1.3/SCN3A and 232 nM on Nav1.7/SCN9A). This toxin suppress Nav1.7 current amplitude without significantly altering the activation, inactivation, and repriming kinetics. Short extreme depolarizations partially activate the toxin-bound channel, indicating voltage-dependent inhibition of this toxin. This toxin increases the deactivation of the Nav1.7 current after extreme depolarizations. The toxin-Nav1.7 complex is gradually dissociated upon prolonged strong depolarizations in a voltage-dependent manner, and the unbound toxin rebinds to Nav1.7 after a long repolarization. Moreover, analysis of chimeric channels showed that the DIIS3-S4 linker is critical for toxin binding to Nav1.7. These data are consistent with this toxin interacting with Nav1.7 site 4 and trapping the domain II voltage sensor in the closed state. The sequence is that of Hainantoxin-III 11 from Cyriopagopus hainanus (Chinese bird spider).